A 265-amino-acid chain; its full sequence is MDFIHILALAILQGLTEFLPISSSAHLILLPVLAGWTDQGLAFDVAVHLGTLVAVISYFRLELARMARDWLQSLAAGQQQGESRLAWAVLLGTLPVGLVGIMLTETTQEALRSPLIIAWSTVGFGFLLAYADWAGKQQRNEHTLTWRDILFIGLAQALALIPGTSRSGITITAGLMLGLTREGAARFSFLLAIPVILLAGGLAALDLLNHTETVDWNALALGALISGLCAYACIHYFFKFLQRIGMLPFAVYRLLLGALLFYLFS.

The next 8 helical transmembrane spans lie at 1–21, 39–61, 85–105, 115–135, 149–169, 187–207, 218–238, and 244–264; these read MDFIHILALAILQGLTEFLPI, QGLAFDVAVHLGTLVAVISYFRL, LAWAVLLGTLPVGLVGIMLTE, LIIAWSTVGFGFLLAYADWAG, ILFIGLAQALALIPGTSRSGI, FSFLLAIPVILLAGGLAALDL, ALALGALISGLCAYACIHYFF, and IGMLPFAVYRLLLGALLFYLF.

Belongs to the UppP family.

The protein localises to the cell inner membrane. The catalysed reaction is di-trans,octa-cis-undecaprenyl diphosphate + H2O = di-trans,octa-cis-undecaprenyl phosphate + phosphate + H(+). Its function is as follows. Catalyzes the dephosphorylation of undecaprenyl diphosphate (UPP). Confers resistance to bacitracin. The chain is Undecaprenyl-diphosphatase from Nitrosococcus oceani (strain ATCC 19707 / BCRC 17464 / JCM 30415 / NCIMB 11848 / C-107).